A 217-amino-acid polypeptide reads, in one-letter code: N-(5'-phosphoribosyl)anthranilate isomerase (217 aa).

This sequence belongs to the TrpF family.

It catalyses the reaction N-(5-phospho-beta-D-ribosyl)anthranilate = 1-(2-carboxyphenylamino)-1-deoxy-D-ribulose 5-phosphate. Its pathway is amino-acid biosynthesis; L-tryptophan biosynthesis; L-tryptophan from chorismate: step 3/5. This Acaryochloris marina (strain MBIC 11017) protein is N-(5'-phosphoribosyl)anthranilate isomerase.